A 331-amino-acid chain; its full sequence is Adenosine deaminase (331 aa).

Zn(2+)-binding residues include histidine 12 and histidine 14. Residues histidine 14, aspartate 16, and glycine 170 each contribute to the substrate site. Residue histidine 197 coordinates Zn(2+). The active-site Proton donor is glutamate 200. Position 278 (aspartate 278) interacts with Zn(2+).

This sequence belongs to the metallo-dependent hydrolases superfamily. Adenosine and AMP deaminases family. Adenosine deaminase subfamily. Requires Zn(2+) as cofactor.

The catalysed reaction is adenosine + H2O + H(+) = inosine + NH4(+). It carries out the reaction 2'-deoxyadenosine + H2O + H(+) = 2'-deoxyinosine + NH4(+). Its function is as follows. Catalyzes the hydrolytic deamination of adenosine and 2-deoxyadenosine. The chain is Adenosine deaminase from Vibrio vulnificus (strain YJ016).